Here is a 485-residue protein sequence, read N- to C-terminus: Cysteine--tRNA ligase (485 aa).

Residue cysteine 28 coordinates Zn(2+). A 'HIGH' region motif is present at residues methionine 30–histidine 40. Zn(2+) contacts are provided by cysteine 209, histidine 234, and glutamate 238. Positions lysine 266–serine 270 match the 'KMSKS' region motif. Lysine 269 contributes to the ATP binding site.

Belongs to the class-I aminoacyl-tRNA synthetase family. Monomer. Requires Zn(2+) as cofactor.

The protein resides in the cytoplasm. It carries out the reaction tRNA(Cys) + L-cysteine + ATP = L-cysteinyl-tRNA(Cys) + AMP + diphosphate. This Nitrosococcus oceani (strain ATCC 19707 / BCRC 17464 / JCM 30415 / NCIMB 11848 / C-107) protein is Cysteine--tRNA ligase.